We begin with the raw amino-acid sequence, 156 residues long: Small ribosomal subunit protein uS7 (156 aa).

The protein belongs to the universal ribosomal protein uS7 family. Part of the 30S ribosomal subunit. Contacts proteins S9 and S11.

One of the primary rRNA binding proteins, it binds directly to 16S rRNA where it nucleates assembly of the head domain of the 30S subunit. Is located at the subunit interface close to the decoding center, probably blocks exit of the E-site tRNA. This Lacticaseibacillus casei (strain BL23) (Lactobacillus casei) protein is Small ribosomal subunit protein uS7.